The sequence spans 519 residues: Exodeoxyribonuclease 7 large subunit (519 aa).

The tract at residues 500–519 is disordered; sequence VGRGKTRKPKEEPPAQGSLL.

It belongs to the XseA family. In terms of assembly, heterooligomer composed of large and small subunits.

The protein localises to the cytoplasm. It catalyses the reaction Exonucleolytic cleavage in either 5'- to 3'- or 3'- to 5'-direction to yield nucleoside 5'-phosphates.. Bidirectionally degrades single-stranded DNA into large acid-insoluble oligonucleotides, which are then degraded further into small acid-soluble oligonucleotides. The chain is Exodeoxyribonuclease 7 large subunit from Cereibacter sphaeroides (strain ATCC 17029 / ATH 2.4.9) (Rhodobacter sphaeroides).